Consider the following 463-residue polypeptide: uncharacterized protein (463 aa).

12 helical membrane-spanning segments follow: residues Asp21–Thr40, Ala50–Val72, Pro84–Pro104, Leu112–Pro132, Leu156–Leu176, Gly186–Phe206, Leu237–Val257, Leu271–Pro291, Ile311–Cys331, Ile334–Ile354, Gly367–Val387, and Leu408–Ile428.

It belongs to the sodium:galactoside symporter (TC 2.A.2) family.

Its subcellular location is the cell membrane. This is an uncharacterized protein from Bacillus subtilis (strain 168).